Reading from the N-terminus, the 117-residue chain is Gamma-aminobutyric acid receptor-associated protein-like 3 (117 aa).

Residues 1-22 are interaction with beta-tubulin; the sequence is MKFQYKEVHPFEYRKKEGEKIR. The interval 36–68 is interaction with GABRG2; the sequence is APKARVPDLDRRKYLVPSDLTDGQFYLLIRKRI. Gly116 carries Phosphatidylethanolamine amidated glycine lipidation. A propeptide (removed in mature form) is located at residue Lys117.

Belongs to the ATG8 family. Interacts with GABRG2 and beta-tubulin. The precursor molecule is cleaved by ATG4B to form the cytosolic form, GABARAPL3-I. This is activated by APG7L/ATG7, transferred to ATG3 and conjugated to phospholipid to form the membrane-bound form, GABARAPL3-II. ATG4B also mediates the delipidation required for GABARAPL1 recycling when autophagosomes fuse with lysosomes. In terms of tissue distribution, ubiquitous. Expressed at very high levels in the brain, heart, peripheral blood leukocytes, liver, kidney, placenta and skeletal muscle. Expressed at very low levels in thymus and small intestine.

It localises to the cytoplasm. The protein localises to the cytoskeleton. Its subcellular location is the cytoplasmic vesicle. The protein resides in the autophagosome membrane. Its function is as follows. Ubiquitin-like modifier involved in autophagosome formation. Whereas LC3s are involved in elongation of the phagophore membrane, the GABARAP/GATE-16 subfamily is essential for a later stage in autophagosome maturation. The polypeptide is Gamma-aminobutyric acid receptor-associated protein-like 3 (GABARAPL3) (Homo sapiens (Human)).